A 111-amino-acid chain; its full sequence is Cytochrome bo(3) ubiquinol oxidase subunit 4 (111 aa).

Residues 1–17 (MSSAAHDNHGAGHGSLG) are Cytoplasmic-facing. The chain crosses the membrane as a helical span at residues 18–38 (SYAIGFVLSVILTAIPFYMVM). Residues 39–46 (DGGFSRHA) are Periplasmic-facing. Residues 47 to 67 (TILTMVVLGLVQVVVHLICFL) traverse the membrane as a helical segment. Topologically, residues 68 to 80 (HMNMSSEGRWNVM) are cytoplasmic. Residues 81–101 (AFIFTVIVILLVVGLSLWIIF) form a helical membrane-spanning segment. Topologically, residues 102–111 (SADMLMMPMP) are periplasmic.

It belongs to the cytochrome c oxidase bacterial subunit 4 family. In terms of assembly, heterooctamer of two A chains, two B chains, two C chains and two D chains.

The protein resides in the cell inner membrane. Its function is as follows. Cytochrome bo(3) ubiquinol terminal oxidase is the component of the aerobic respiratory chain of E.coli that predominates when cells are grown at high aeration. Has proton pump activity across the membrane in addition to electron transfer, pumping 2 protons/electron. This Pseudomonas aeruginosa (strain ATCC 15692 / DSM 22644 / CIP 104116 / JCM 14847 / LMG 12228 / 1C / PRS 101 / PAO1) protein is Cytochrome bo(3) ubiquinol oxidase subunit 4 (cyoD).